Reading from the N-terminus, the 208-residue chain is Adenylyl-sulfate kinase (208 aa).

31-38 (GLSGSGKS) contacts ATP. Residue serine 105 is the Phosphoserine intermediate of the active site.

The protein belongs to the APS kinase family.

The enzyme catalyses adenosine 5'-phosphosulfate + ATP = 3'-phosphoadenylyl sulfate + ADP + H(+). It functions in the pathway sulfur metabolism; hydrogen sulfide biosynthesis; sulfite from sulfate: step 2/3. In terms of biological role, catalyzes the synthesis of activated sulfate. The chain is Adenylyl-sulfate kinase from Pseudomonas entomophila (strain L48).